The chain runs to 107 residues: Anti-adapter protein IraM (107 aa).

Belongs to the IraM/RssC family.

The protein resides in the cytoplasm. In terms of biological role, inhibits RpoS proteolysis by regulating RssB activity, thereby increasing the stability of the sigma stress factor RpoS during magnesium starvation. The polypeptide is Anti-adapter protein IraM (Escherichia coli (strain K12 / MC4100 / BW2952)).